The sequence spans 910 residues: MFSILKKIFGTANDRTIKKLFSDIAKINSLEPAIQKLSDEELKNKTVEFKKKLKNGATLDDIAYEAFAVVREASRRVYGMRHFDVQLIGGLVLHRGMITEMRTGEGKTLVATLPAYLNALAEKGVHVVTVNDYLVSRDSASMGKIYNFLGLSVGCIVAGMTDEAKREAYNSDITYATNNELGFDYLRDNMKYSLQERVLRPFNFAIIDEVDSILIDEARTPLVISGPVNDNSELYGKVDKLVRMLNVSDFEKDEKLKTINLTESGISHVESLLSQADIIKPNSGLYDFENLSLVHYVNQALRAHNMFMIDVDYLVRDGKVMIIDEFTGRVMEGRRYSEGLHQALEAKENVKIQNENQTLASITFQNYFRNYPKLSGMTGTAMTEAPELKDIYNLDVVAVPTHNKVTRRDLDDEIYGSKKEKYDAILKLIKDCYDRGQPVLVGTVSIEKSEEISNVLNKNKIPHKVLNAKFHEQEAFIIAQAGRFKAVTIATNMAGRGTDIMLGGNPEMLIEQIDRKSLTNAAYKEKVNEIKAQTAEEKKQVIAAGGLFVIGTERHESRRIDNQLRGRSGRQGDPGNTKFFLSLDDDLMRIFASERISGVLRTLGLKDGEAIHHPMISRSLEKAQQKVEGHNYEIRKNLLRFDDVMNDQRKIIYEQRTEIIKSKDSYDFLSSTTEELAKKIVLTFMPAGSYREDWDIENLSVELHRTFAIKLDQNLISKNDVTEEEVTKIVIQTADSIYKSKEEAYSPDLMHNAVKYILLTTLDQVWKDHLHSLDHLRQGISLRAYAQKDPLSEYKREAFNLFEHMLNNLKELFIQTVYHFHIDLKHIQKEDISLENKKLQNNMHESREDPAFSKYNAGSNLETDLRPVISRINPEDRDPKNPTSWGKVSRNELCPCGSGKKYKYCHGLNE.

Residues Gln-86, 104-108, and Asp-499 each bind ATP; that span reads GEGKT. Positions 894, 896, 905, and 906 each coordinate Zn(2+).

This sequence belongs to the SecA family. In terms of assembly, monomer and homodimer. Part of the essential Sec protein translocation apparatus which comprises SecA, SecYEG and auxiliary proteins SecDF-YajC and YidC. It depends on Zn(2+) as a cofactor.

It localises to the cell inner membrane. The protein resides in the cytoplasm. It catalyses the reaction ATP + H2O + cellular proteinSide 1 = ADP + phosphate + cellular proteinSide 2.. Its function is as follows. Part of the Sec protein translocase complex. Interacts with the SecYEG preprotein conducting channel. Has a central role in coupling the hydrolysis of ATP to the transfer of proteins into and across the cell membrane, serving both as a receptor for the preprotein-SecB complex and as an ATP-driven molecular motor driving the stepwise translocation of polypeptide chains across the membrane. In Rickettsia bellii (strain RML369-C), this protein is Protein translocase subunit SecA.